The following is a 410-amino-acid chain: Putative competence-damage inducible protein (410 aa).

Belongs to the CinA family.

This chain is Putative competence-damage inducible protein, found in Finegoldia magna (strain ATCC 29328 / DSM 20472 / WAL 2508) (Peptostreptococcus magnus).